The sequence spans 198 residues: Probable GTP-binding protein EngB (198 aa).

The region spanning 36 to 198 is the EngB-type G domain; the sequence is SDPQFAFIGR…NLSKLQELLE (163 aa). Residues 44–51, 70–74, 88–91, 155–158, and 182–184 contribute to the GTP site; these read GRSNVGKS, GRTQL, DLPG, NKID, and ISA. Ser51 and Thr72 together coordinate Mg(2+).

The protein belongs to the TRAFAC class TrmE-Era-EngA-EngB-Septin-like GTPase superfamily. EngB GTPase family. Mg(2+) serves as cofactor.

Functionally, necessary for normal cell division and for the maintenance of normal septation. In Mesomycoplasma hyopneumoniae (strain 7448) (Mycoplasma hyopneumoniae), this protein is Probable GTP-binding protein EngB.